The primary structure comprises 160 residues: uncharacterized protein (160 aa).

This is an uncharacterized protein from Escherichia coli (strain K12).